A 22-amino-acid polypeptide reads, in one-letter code: Oxygen-evolving enhancer protein 2 (22 aa).

It belongs to the PsbP family.

Its subcellular location is the plastid. The protein resides in the chloroplast thylakoid membrane. In terms of biological role, may be involved in the regulation of photosystem II. This is Oxygen-evolving enhancer protein 2 from Physcomitrium patens (Spreading-leaved earth moss).